The following is a 506-amino-acid chain: Cobyric acid synthase (506 aa).

Residues 260 to 453 form the GATase cobBQ-type domain; it reads KVGVAAIYFP…FHGIFNEPAV (194 aa). Cys341 functions as the Nucleophile in the catalytic mechanism. His445 is a catalytic residue.

Belongs to the CobB/CobQ family. CobQ subfamily.

Its pathway is cofactor biosynthesis; adenosylcobalamin biosynthesis. Its function is as follows. Catalyzes amidations at positions B, D, E, and G on adenosylcobyrinic A,C-diamide. NH(2) groups are provided by glutamine, and one molecule of ATP is hydrogenolyzed for each amidation. This chain is Cobyric acid synthase, found in Chlorobium chlorochromatii (strain CaD3).